A 347-amino-acid chain; its full sequence is Anthranilate phosphoribosyltransferase (347 aa).

5-phospho-alpha-D-ribose 1-diphosphate contacts are provided by residues G88, 91-92 (GD), T96, 98-101 (NIST), 116-124 (KHGNRSVSS), and S128. G88 serves as a coordination point for anthranilate. A Mg(2+)-binding site is contributed by S100. N119 provides a ligand contact to anthranilate. R174 is an anthranilate binding site. 2 residues coordinate Mg(2+): D232 and E233.

It belongs to the anthranilate phosphoribosyltransferase family. Homodimer. Mg(2+) is required as a cofactor.

The enzyme catalyses N-(5-phospho-beta-D-ribosyl)anthranilate + diphosphate = 5-phospho-alpha-D-ribose 1-diphosphate + anthranilate. The protein operates within amino-acid biosynthesis; L-tryptophan biosynthesis; L-tryptophan from chorismate: step 2/5. Catalyzes the transfer of the phosphoribosyl group of 5-phosphorylribose-1-pyrophosphate (PRPP) to anthranilate to yield N-(5'-phosphoribosyl)-anthranilate (PRA). The polypeptide is Anthranilate phosphoribosyltransferase (Shewanella sp. (strain MR-7)).